Reading from the N-terminus, the 730-residue chain is Ribosomal RNA large subunit methyltransferase K/L (730 aa).

In terms of domain architecture, THUMP spans 46 to 157 (TAYRLCVWSR…RGEAILSLDL (112 aa)). A disordered region spans residues 394 to 418 (GERREAQPEGTEARQQVPQASEPAR).

Belongs to the methyltransferase superfamily. RlmKL family.

Its subcellular location is the cytoplasm. The catalysed reaction is guanosine(2445) in 23S rRNA + S-adenosyl-L-methionine = N(2)-methylguanosine(2445) in 23S rRNA + S-adenosyl-L-homocysteine + H(+). The enzyme catalyses guanosine(2069) in 23S rRNA + S-adenosyl-L-methionine = N(2)-methylguanosine(2069) in 23S rRNA + S-adenosyl-L-homocysteine + H(+). Its function is as follows. Specifically methylates the guanine in position 2445 (m2G2445) and the guanine in position 2069 (m7G2069) of 23S rRNA. The chain is Ribosomal RNA large subunit methyltransferase K/L from Pseudomonas putida (strain ATCC 700007 / DSM 6899 / JCM 31910 / BCRC 17059 / LMG 24140 / F1).